We begin with the raw amino-acid sequence, 199 residues long: Recombination protein RecR (199 aa).

A C4-type zinc finger spans residues 57 to 72 (CEICGNLDTKSICHIC). Positions 80-175 (STIAIVETVA…KISRLASGIP (96 aa)) constitute a Toprim domain.

This sequence belongs to the RecR family.

May play a role in DNA repair. It seems to be involved in an RecBC-independent recombinational process of DNA repair. It may act with RecF and RecO. The chain is Recombination protein RecR from Rickettsia prowazekii (strain Madrid E).